Here is a 399-residue protein sequence, read N- to C-terminus: MRAVLELTRRRARNARFARARAVVGARARAADAQELRDDSKGGSSVDKATSTAAEARETAHTLEGFREALRHGPGFDDFVRGDVAYSVPAPKSLKDKTTRKPAWLKREVPGGERYTEIKSKLRELKLATVCEEAKCPNLGECWGGGDGKTATATIMIMGDTCTRGCRFCAVKTAKAPPPLDKDEPANVSKAIAAWGLDYVVLTSVDRDDIEDQGAGHFRETVQRLKASCDVLVEALTPDFRGEKHLVELVATSGLDVFAHNVETVPELQRDVRDRRANWDQSIEVLKHAKKSGAKITKTSIMLGLGETHEQVVNALKLLREADVDVVTFGQYMRPTKKHLAVVEYVTPEAFKRYQEIAEEMGFLYVASGAMVRSSYKAGEFFLANVIKQRKAKEAAAAN.

A mitochondrion-targeting transit peptide spans 1 to 30 (MRAVLELTRRRARNARFARARAVVGARARA). Residues 31–41 (ADAQELRDDSK) are compositionally biased toward basic and acidic residues. The segment at 31 to 58 (ADAQELRDDSKGGSSVDKATSTAAEARE) is disordered. Cys-131, Cys-136, Cys-142, Cys-162, Cys-166, Cys-169, and Ser-375 together coordinate [4Fe-4S] cluster. The 220-residue stretch at 145 to 364 (GGDGKTATAT…QEIAEEMGFL (220 aa)) folds into the Radical SAM core domain.

Belongs to the radical SAM superfamily. Lipoyl synthase family. [4Fe-4S] cluster is required as a cofactor.

Its subcellular location is the mitochondrion. It catalyses the reaction [[Fe-S] cluster scaffold protein carrying a second [4Fe-4S](2+) cluster] + N(6)-octanoyl-L-lysyl-[protein] + 2 oxidized [2Fe-2S]-[ferredoxin] + 2 S-adenosyl-L-methionine + 4 H(+) = [[Fe-S] cluster scaffold protein] + N(6)-[(R)-dihydrolipoyl]-L-lysyl-[protein] + 4 Fe(3+) + 2 hydrogen sulfide + 2 5'-deoxyadenosine + 2 L-methionine + 2 reduced [2Fe-2S]-[ferredoxin]. It functions in the pathway protein modification; protein lipoylation via endogenous pathway; protein N(6)-(lipoyl)lysine from octanoyl-[acyl-carrier-protein]: step 2/2. Catalyzes the radical-mediated insertion of two sulfur atoms into the C-6 and C-8 positions of the octanoyl moiety bound to the lipoyl domains of lipoate-dependent enzymes, thereby converting the octanoylated domains into lipoylated derivatives. This is Lipoyl synthase, mitochondrial from Ostreococcus lucimarinus (strain CCE9901).